We begin with the raw amino-acid sequence, 268 residues long: Tryptophan synthase alpha chain (268 aa).

Residues E49 and D60 each act as proton acceptor in the active site.

This sequence belongs to the TrpA family. In terms of assembly, tetramer of two alpha and two beta chains.

The enzyme catalyses (1S,2R)-1-C-(indol-3-yl)glycerol 3-phosphate + L-serine = D-glyceraldehyde 3-phosphate + L-tryptophan + H2O. Its pathway is amino-acid biosynthesis; L-tryptophan biosynthesis; L-tryptophan from chorismate: step 5/5. In terms of biological role, the alpha subunit is responsible for the aldol cleavage of indoleglycerol phosphate to indole and glyceraldehyde 3-phosphate. This Pseudomonas aeruginosa (strain LESB58) protein is Tryptophan synthase alpha chain.